A 447-amino-acid chain; its full sequence is MIKITKGLDLPIAGMPLQQISPAPAVKRVALLGEEYVGMRPAMAVKEGDRVKKGQILFEDKKTPGVYFTAPASGVVSAIHRGERRVLQSVVIDIEGNEAVAFTRYAADALAELPRDTVQQQLLASGLWTALRTRPFSKTPRPGSVPAAIFVNAMDTNPLAAEPQPIILAERAAFDAGLTVLTRLTDGKVHVCQPSGGKLGGHPAGQVCFNQFSGPHPAGLPGTHIHFLEPVSLNKQVWHLNYQDAIAIGQLFLEGELNCERVIALGGPQVKSPRLVKTTLGASLDDLLAGELEEGENRVISGSVLSGTRAHGPHAFLGRFHLQVSVVREGREKELFGWVMPGKEKFSITRTTLGHFFKRKRFHFSTDTHGGERAMVPIGNYERVMPLDILPTILLRDLLAGDSDSAQALGCLELDEEDLALCTYVCPGKYEYGPALRSVLTQIEQEG.

The protein belongs to the NqrA family. In terms of assembly, composed of six subunits; NqrA, NqrB, NqrC, NqrD, NqrE and NqrF.

It catalyses the reaction a ubiquinone + n Na(+)(in) + NADH + H(+) = a ubiquinol + n Na(+)(out) + NAD(+). Its function is as follows. NQR complex catalyzes the reduction of ubiquinone-1 to ubiquinol by two successive reactions, coupled with the transport of Na(+) ions from the cytoplasm to the periplasm. NqrA to NqrE are probably involved in the second step, the conversion of ubisemiquinone to ubiquinol. This chain is Na(+)-translocating NADH-quinone reductase subunit A, found in Klebsiella pneumoniae (strain 342).